The primary structure comprises 159 residues: Ribosome maturation factor RimP (159 aa).

This sequence belongs to the RimP family.

It is found in the cytoplasm. Functionally, required for maturation of 30S ribosomal subunits. The sequence is that of Ribosome maturation factor RimP from Geobacter sulfurreducens (strain ATCC 51573 / DSM 12127 / PCA).